Reading from the N-terminus, the 171-residue chain is Adenine phosphoribosyltransferase (171 aa).

Belongs to the purine/pyrimidine phosphoribosyltransferase family. In terms of assembly, homodimer.

Its subcellular location is the cytoplasm. The enzyme catalyses AMP + diphosphate = 5-phospho-alpha-D-ribose 1-diphosphate + adenine. The protein operates within purine metabolism; AMP biosynthesis via salvage pathway; AMP from adenine: step 1/1. Its function is as follows. Catalyzes a salvage reaction resulting in the formation of AMP, that is energically less costly than de novo synthesis. The chain is Adenine phosphoribosyltransferase from Acidiphilium cryptum (strain JF-5).